We begin with the raw amino-acid sequence, 408 residues long: Argininosuccinate synthase (408 aa).

An ATP-binding site is contributed by 8-16; that stretch reads AYSGGLDTT. Residue Tyr86 participates in L-citrulline binding. Gly116 contributes to the ATP binding site. Thr118, Asn122, and Asp123 together coordinate L-aspartate. Asn122 provides a ligand contact to L-citrulline. L-citrulline contacts are provided by Arg126, Ser177, Ser186, Glu263, and Tyr275.

Belongs to the argininosuccinate synthase family. Type 1 subfamily. As to quaternary structure, homotetramer.

Its subcellular location is the cytoplasm. It carries out the reaction L-citrulline + L-aspartate + ATP = 2-(N(omega)-L-arginino)succinate + AMP + diphosphate + H(+). The protein operates within amino-acid biosynthesis; L-arginine biosynthesis; L-arginine from L-ornithine and carbamoyl phosphate: step 2/3. The polypeptide is Argininosuccinate synthase (Agathobacter rectalis (strain ATCC 33656 / DSM 3377 / JCM 17463 / KCTC 5835 / VPI 0990) (Eubacterium rectale)).